Reading from the N-terminus, the 188-residue chain is Pyridoxal 5'-phosphate synthase subunit PdxT (188 aa).

46-48 is an L-glutamine binding site; the sequence is GES. Residue Cys78 is the Nucleophile of the active site. L-glutamine-binding positions include Arg105 and 134–135; that span reads IR. Catalysis depends on charge relay system residues His170 and Glu172.

It belongs to the glutaminase PdxT/SNO family. In terms of assembly, in the presence of PdxS, forms a dodecamer of heterodimers. Only shows activity in the heterodimer.

The enzyme catalyses aldehydo-D-ribose 5-phosphate + D-glyceraldehyde 3-phosphate + L-glutamine = pyridoxal 5'-phosphate + L-glutamate + phosphate + 3 H2O + H(+). The catalysed reaction is L-glutamine + H2O = L-glutamate + NH4(+). The protein operates within cofactor biosynthesis; pyridoxal 5'-phosphate biosynthesis. Its function is as follows. Catalyzes the hydrolysis of glutamine to glutamate and ammonia as part of the biosynthesis of pyridoxal 5'-phosphate. The resulting ammonia molecule is channeled to the active site of PdxS. The sequence is that of Pyridoxal 5'-phosphate synthase subunit PdxT from Clostridium kluyveri (strain ATCC 8527 / DSM 555 / NBRC 12016 / NCIMB 10680 / K1).